The following is a 422-amino-acid chain: Glutamyl-tRNA reductase (422 aa).

Residues 49-52, Ser107, 112-114, and Gln118 contribute to the substrate site; these read TCNR and EPQ. Cys50 functions as the Nucleophile in the catalytic mechanism. 187–192 provides a ligand contact to NADP(+); that stretch reads GAGETI.

It belongs to the glutamyl-tRNA reductase family. Homodimer.

It carries out the reaction (S)-4-amino-5-oxopentanoate + tRNA(Glu) + NADP(+) = L-glutamyl-tRNA(Glu) + NADPH + H(+). It functions in the pathway porphyrin-containing compound metabolism; protoporphyrin-IX biosynthesis; 5-aminolevulinate from L-glutamyl-tRNA(Glu): step 1/2. In terms of biological role, catalyzes the NADPH-dependent reduction of glutamyl-tRNA(Glu) to glutamate 1-semialdehyde (GSA). The chain is Glutamyl-tRNA reductase from Pseudomonas aeruginosa (strain ATCC 15692 / DSM 22644 / CIP 104116 / JCM 14847 / LMG 12228 / 1C / PRS 101 / PAO1).